The sequence spans 551 residues: MKEVIMKYVVQNAAKYGKASEKAVMGKVMAENPELRKKAKEVLELVKECITEFEALSEEVRKELIKKYSMDSEAKRELETKKLPELEGAEKGKVVMRFAPNPNGPPTLGSARGIIVNGEYAKMYEGKYIIRFDDTDPRTKRPMIEAYEWYLEDIEWLGYKPDEVIYASRRIPIYYDYARKLIEMGKAYTCFCSQEEFKKFRDSGEECPHRNISVEDTLEVWERMLEGDYEEGEVVLRIKTDMRHKDPAIRDWVAFRIIKESHPLVGDKYVVYPTLDFESAIEDHLLGITHIIRGKDLIDSERRQRYIYEYFGWIYPITKHWGRVKIFEFGKLSTSSIKKDIERGKYEGWDDPRLPTLRAFRRRGFEPEAIKSFFLSLGVGENDVSVSLKNLYAENRKIIDRKANRYFFIWGPVKIEIVNLPEKKEVELPLNPHTGEKRRLKGERTIYVTKDDFERLKGQVVRLKDFCNVLLDEKAEFMGFELEGVKKGKNIIHWLPESEAIKGKVIGEREAEGLVERNAVRDVGKVVQFERFAFCKVESADEELVAVYTHP.

The short motif at 100–110 (PNPNGPPTLGS) is the 'HIGH' region element.

It belongs to the class-I aminoacyl-tRNA synthetase family. Glutamate--tRNA ligase type 2 subfamily.

It localises to the cytoplasm. The catalysed reaction is tRNA(Glu) + L-glutamate + ATP = L-glutamyl-tRNA(Glu) + AMP + diphosphate. Catalyzes the attachment of glutamate to tRNA(Glu) in a two-step reaction: glutamate is first activated by ATP to form Glu-AMP and then transferred to the acceptor end of tRNA(Glu). The protein is Glutamate--tRNA ligase of Archaeoglobus fulgidus (strain ATCC 49558 / DSM 4304 / JCM 9628 / NBRC 100126 / VC-16).